A 563-amino-acid polypeptide reads, in one-letter code: NAD-dependent malic enzyme (563 aa).

The Proton donor role is filled by tyrosine 101. Position 154 (arginine 154) interacts with NAD(+). Lysine 172 acts as the Proton acceptor in catalysis. A divalent metal cation is bound by residues glutamate 243, aspartate 244, and aspartate 267. NAD(+) is bound by residues aspartate 267 and asparagine 416.

Belongs to the malic enzymes family. In terms of assembly, homotetramer. Mg(2+) is required as a cofactor. It depends on Mn(2+) as a cofactor.

It catalyses the reaction (S)-malate + NAD(+) = pyruvate + CO2 + NADH. The catalysed reaction is oxaloacetate + H(+) = pyruvate + CO2. In Pseudomonas savastanoi pv. phaseolicola (strain 1448A / Race 6) (Pseudomonas syringae pv. phaseolicola (strain 1448A / Race 6)), this protein is NAD-dependent malic enzyme.